Reading from the N-terminus, the 483-residue chain is Rhamnulokinase (483 aa).

11–15 (ASSGR) is an ATP binding site. Substrate contacts are provided by residues G79 and 234–236 (HDT). The Proton acceptor role is filled by D235. An ATP-binding site is contributed by T257. Residue N294 coordinates substrate. An ATP-binding site is contributed by Q302. A disulfide bridge connects residues C352 and C369. G401 serves as a coordination point for ATP.

It belongs to the rhamnulokinase family. Mg(2+) is required as a cofactor.

The enzyme catalyses L-rhamnulose + ATP = L-rhamnulose 1-phosphate + ADP + H(+). The protein operates within carbohydrate degradation; L-rhamnose degradation; glycerone phosphate from L-rhamnose: step 2/3. In terms of biological role, involved in the catabolism of L-rhamnose (6-deoxy-L-mannose). Catalyzes the transfer of the gamma-phosphate group from ATP to the 1-hydroxyl group of L-rhamnulose to yield L-rhamnulose 1-phosphate. This Listeria monocytogenes serovar 1/2a (strain ATCC BAA-679 / EGD-e) protein is Rhamnulokinase.